The sequence spans 115 residues: uncharacterized protein (115 aa).

3 consecutive transmembrane segments (helical) span residues leucine 23 to alanine 43, alanine 63 to valine 83, and asparagine 90 to alanine 110.

It localises to the cell membrane. This is an uncharacterized protein from Mycobacterium bovis (strain ATCC BAA-935 / AF2122/97).